A 311-amino-acid chain; its full sequence is MQELRFVLIVVGALAIMALLFHGLWTSKKEGKAKFGDKPLSKLDLGESEPKESEMYVAPEDDYEIIRKERKEPAFEDEKPFSTSGVIGDPLIDDLHSGQDKENKFSQPKFDDDITVAEAEAAASIEQDAPAWVEQPQEIDEPLTHHPDEIDAFSGEETIVELDEPMSQTVEPELQVIVLNVHCAGDSPFVGTKLFDSMQQNGLVYGEMDIFHRHLDMSGTGKVLFSVANMMHPGTLKHDDPAEFSTKGISFFMTLPCYGEADQNFNLMLKTAQKIADDLGGNVLDDKRNLMTPDRLAGYRRQIVEFKAANA.

Residues 1–5 lie on the Periplasmic side of the membrane; it reads MQELR. Residues 6–26 form a helical membrane-spanning segment; sequence FVLIVVGALAIMALLFHGLWT. The Cytoplasmic segment spans residues 27–311; the sequence is SKKEGKAKFG…QIVEFKAANA (285 aa). Residues 32-54 are compositionally biased toward basic and acidic residues; sequence KAKFGDKPLSKLDLGESEPKESE. Residues 32–60 are disordered; sequence KAKFGDKPLSKLDLGESEPKESEMYVAPE.

Belongs to the ZipA family. As to quaternary structure, interacts with FtsZ via their C-terminal domains.

It localises to the cell inner membrane. In terms of biological role, essential cell division protein that stabilizes the FtsZ protofilaments by cross-linking them and that serves as a cytoplasmic membrane anchor for the Z ring. Also required for the recruitment to the septal ring of downstream cell division proteins. The sequence is that of Cell division protein ZipA from Vibrio vulnificus (strain CMCP6).